Here is a 295-residue protein sequence, read N- to C-terminus: MADTSLSPVLPLFANTPSSVSFKKLRKRLVRGALEVIDTYGLVDRRAIETGEKPHPKWLVCLSGGKDSYGLLAVLLDLQWQGALPVDLIACNLDQGQPGFPKHILPEWLTQNGVTHKIITEDTYSIVTDKVPEGRTYCSMCSRLRRGILYRVAREEGCEAIVLGHHRDDALATFMMNLIHGGRLAAMPPKLLNDDGDVQVFRPLITAAEDDLAKFAEAMEFPIIPCNLCGSQDGLQRVVMNRMLDEWERKKPGTRQVMAKALTNVRPSHLHDPRVFDFAGLMLGGKGEDDPNVPF.

Residues 63 to 68 (SGGKDS) carry the PP-loop motif motif. Positions 138, 141, and 229 each coordinate [4Fe-4S] cluster.

This sequence belongs to the TtcA family. Homodimer. It depends on Mg(2+) as a cofactor. Requires [4Fe-4S] cluster as cofactor.

It is found in the cytoplasm. It catalyses the reaction cytidine(32) in tRNA + S-sulfanyl-L-cysteinyl-[cysteine desulfurase] + AH2 + ATP = 2-thiocytidine(32) in tRNA + L-cysteinyl-[cysteine desulfurase] + A + AMP + diphosphate + H(+). The protein operates within tRNA modification. In terms of biological role, catalyzes the ATP-dependent 2-thiolation of cytidine in position 32 of tRNA, to form 2-thiocytidine (s(2)C32). The sulfur atoms are provided by the cysteine/cysteine desulfurase (IscS) system. The sequence is that of tRNA-cytidine(32) 2-sulfurtransferase from Hyphomonas neptunium (strain ATCC 15444).